The primary structure comprises 356 residues: S-adenosylmethionine:tRNA ribosyltransferase-isomerase (356 aa).

This sequence belongs to the QueA family. Monomer.

Its subcellular location is the cytoplasm. It catalyses the reaction 7-aminomethyl-7-carbaguanosine(34) in tRNA + S-adenosyl-L-methionine = epoxyqueuosine(34) in tRNA + adenine + L-methionine + 2 H(+). It functions in the pathway tRNA modification; tRNA-queuosine biosynthesis. Transfers and isomerizes the ribose moiety from AdoMet to the 7-aminomethyl group of 7-deazaguanine (preQ1-tRNA) to give epoxyqueuosine (oQ-tRNA). The chain is S-adenosylmethionine:tRNA ribosyltransferase-isomerase from Xanthomonas campestris pv. campestris (strain 8004).